The following is a 265-amino-acid chain: Indole-3-glycerol phosphate synthase (265 aa).

Belongs to the TrpC family.

The catalysed reaction is 1-(2-carboxyphenylamino)-1-deoxy-D-ribulose 5-phosphate + H(+) = (1S,2R)-1-C-(indol-3-yl)glycerol 3-phosphate + CO2 + H2O. It functions in the pathway amino-acid biosynthesis; L-tryptophan biosynthesis; L-tryptophan from chorismate: step 4/5. The sequence is that of Indole-3-glycerol phosphate synthase from Hyphomonas neptunium (strain ATCC 15444).